Reading from the N-terminus, the 205-residue chain is N-(5'-phosphoribosyl)anthranilate isomerase (205 aa).

This sequence belongs to the TrpF family.

It catalyses the reaction N-(5-phospho-beta-D-ribosyl)anthranilate = 1-(2-carboxyphenylamino)-1-deoxy-D-ribulose 5-phosphate. The protein operates within amino-acid biosynthesis; L-tryptophan biosynthesis; L-tryptophan from chorismate: step 3/5. The polypeptide is N-(5'-phosphoribosyl)anthranilate isomerase (Thiobacillus denitrificans (strain ATCC 25259 / T1)).